The sequence spans 126 residues: Methylglyoxal synthase (126 aa).

The MGS-like domain occupies 1–126 (MAERQKIALI…ADRLLPVITE (126 aa)). Residues histidine 12, lysine 16, 38 to 41 (TGTT), and 59 to 60 (SG) each bind substrate. The Proton donor/acceptor role is filled by aspartate 65. Position 92 (histidine 92) interacts with substrate.

It belongs to the methylglyoxal synthase family.

It carries out the reaction dihydroxyacetone phosphate = methylglyoxal + phosphate. Catalyzes the formation of methylglyoxal from dihydroxyacetone phosphate. The sequence is that of Methylglyoxal synthase from Allorhizobium ampelinum (strain ATCC BAA-846 / DSM 112012 / S4) (Agrobacterium vitis (strain S4)).